The sequence spans 268 residues: Hemin import ATP-binding protein HmuV (268 aa).

An ABC transporter domain is found at 5–241 (LKAEAASFAL…ELIADVFDVA (237 aa)). Position 37–44 (37–44 (GPNGAGKS)) interacts with ATP.

This sequence belongs to the ABC transporter superfamily. Heme (hemin) importer (TC 3.A.1.14.5) family. The complex is composed of two ATP-binding proteins (HmuV), two transmembrane proteins (HmuU) and a solute-binding protein (HmuT).

The protein resides in the cell inner membrane. Part of the ABC transporter complex HmuTUV involved in hemin import. Responsible for energy coupling to the transport system. The protein is Hemin import ATP-binding protein HmuV of Rhodopseudomonas palustris (strain ATCC BAA-98 / CGA009).